A 117-amino-acid polypeptide reads, in one-letter code: Aspartate 1-decarboxylase (117 aa).

Residue S25 is the Schiff-base intermediate with substrate; via pyruvic acid of the active site. S25 is subject to Pyruvic acid (Ser). T57 contributes to the substrate binding site. Catalysis depends on Y58, which acts as the Proton donor. 72–74 contributes to the substrate binding site; the sequence is GAA.

The protein belongs to the PanD family. Heterooctamer of four alpha and four beta subunits. The cofactor is pyruvate. In terms of processing, is synthesized initially as an inactive proenzyme, which is activated by self-cleavage at a specific serine bond to produce a beta-subunit with a hydroxyl group at its C-terminus and an alpha-subunit with a pyruvoyl group at its N-terminus.

The protein resides in the cytoplasm. The catalysed reaction is L-aspartate + H(+) = beta-alanine + CO2. Its pathway is cofactor biosynthesis; (R)-pantothenate biosynthesis; beta-alanine from L-aspartate: step 1/1. Functionally, catalyzes the pyruvoyl-dependent decarboxylation of aspartate to produce beta-alanine. The polypeptide is Aspartate 1-decarboxylase (Helicobacter pylori (strain J99 / ATCC 700824) (Campylobacter pylori J99)).